The primary structure comprises 444 residues: MSEMTPREIVSELDKHIIGQDAAKRSVAIALRNRWRRMQLNEELRHEVTPKNILMIGPTGVGKTEIARRLAKLANAPFIKVEATKFTEVGYVGKEVDSIIRDLTDAAIKMVRMQSIDKNRYRAEELAEERVLDVLIPPAKNNWGQAEQPQEPSAARQAFRKKLREGQLDDKEIEIDLAAAPMGVEIMSPPGMEEMTSQLQSMFQNLGGQKQKPRKLKIKDAMKLLIEEEAAKLVNPEELKQEAIDAVEQHGIVFIDEIDKICKRGGNSSGPDVSREGVQRDLLPLVEGCTVSTKHGMVKTDHILFIASGAFQVASPSDLIPELQGRLPIRVELKALTTHDFERILTEPNASITVQYKALMATEGVNIEFTEDGIKRIAQAAWQVNETTENIGARRLHTVLERLVEDISYDASEMNGQTVIIDAEYVSKHLDVLVADEDLSRFIL.

Residues isoleucine 18, 60–65 (GVGKTE), aspartate 256, glutamate 322, and arginine 394 contribute to the ATP site.

Belongs to the ClpX chaperone family. HslU subfamily. In terms of assembly, a double ring-shaped homohexamer of HslV is capped on each side by a ring-shaped HslU homohexamer. The assembly of the HslU/HslV complex is dependent on binding of ATP.

It localises to the cytoplasm. ATPase subunit of a proteasome-like degradation complex; this subunit has chaperone activity. The binding of ATP and its subsequent hydrolysis by HslU are essential for unfolding of protein substrates subsequently hydrolyzed by HslV. HslU recognizes the N-terminal part of its protein substrates and unfolds these before they are guided to HslV for hydrolysis. This Klebsiella pneumoniae (strain 342) protein is ATP-dependent protease ATPase subunit HslU.